A 303-amino-acid polypeptide reads, in one-letter code: Glutaminase (303 aa).

Positions 63, 113, 157, 164, 188, 239, and 257 each coordinate substrate.

It belongs to the glutaminase family. Homotetramer.

It carries out the reaction L-glutamine + H2O = L-glutamate + NH4(+). The polypeptide is Glutaminase (Saccharopolyspora erythraea (strain ATCC 11635 / DSM 40517 / JCM 4748 / NBRC 13426 / NCIMB 8594 / NRRL 2338)).